The following is a 234-amino-acid chain: Prolactin-6A1 (234 aa).

The first 33 residues, 1 to 33 (MVKSWLRMSKKMEAGTLLMLLMSNILLWENVAS), serve as a signal peptide directing secretion. N61 is a glycosylation site (N-linked (GlcNAc...) asparagine). Cystine bridges form between C93–C209 and C226–C234.

The protein belongs to the somatotropin/prolactin family.

It is found in the secreted. This chain is Prolactin-6A1 (Prl6a1), found in Rattus norvegicus (Rat).